A 47-amino-acid polypeptide reads, in one-letter code: Large ribosomal subunit protein bL34 (47 aa).

A disordered region spans residues 1 to 47 (MVTEGLKPHISIKKKKRKSGFLARMRTKSGRKIIARRRRKGRKRLAP). Residues 10–47 (ISIKKKKRKSGFLARMRTKSGRKIIARRRRKGRKRLAP) show a composition bias toward basic residues.

The protein belongs to the bacterial ribosomal protein bL34 family.

The polypeptide is Large ribosomal subunit protein bL34 (rpmH) (Aquifex aeolicus (strain VF5)).